Here is a 514-residue protein sequence, read N- to C-terminus: Cytochrome P450 monooxygenase aneD (514 aa).

Residues 6–26 (ICTLLAVIATTSLGLLFLSII) form a helical membrane-spanning segment. Asn-113, Asn-261, and Asn-347 each carry an N-linked (GlcNAc...) asparagine glycan. Position 424 (Cys-424) interacts with heme.

This sequence belongs to the cytochrome P450 family. Heme is required as a cofactor.

It is found in the membrane. The catalysed reaction is asperaculane D + reduced [NADPH--hemoprotein reductase] + O2 = asperaculane E + oxidized [NADPH--hemoprotein reductase] + H2O + H(+). Its pathway is secondary metabolite biosynthesis. Cytochrome P450 monooxygenase; part of the gene cluster that mediates the biosynthesis of aculenes, a unique type of norsesquiterpenes that contain a nordaucane skeleton linked to an L-proline moiety and are of mixed biosynthetic origin. The pathway begins with the synthesis of dauca-4,7-diene by the terpene cyclase aneC using farnesyl pyrophosphate (FPP) as substrate. The cytochrome P450 monooxygenase aneF then performs the initial oxidation at C-12 of dauca-4,7-diene to yield asperaculane D. Asperaculane D is substrate of the cytochrome P450 monooxygenase aneD for C-10 hydroxylation to yield asperaculane E. The cytochrome P450 monooxygenase aneG then converts asperaculane E into aculene D via C-2 oxidation. The monomodular nonribosomal peptide synthtase aneB adenylates L-proline and the thiohydrolase aneE transfers this activated L-proline derivative to aculenes D and C to produce respectively aculenes B and A. The dioxygenase aneA converts aculene D into aculene C, and aculene B into aculene A by introducing the 5,6-alkene moiety. Asperculanes A, B, C and F, as well as 14-prolyl asperculane C, might be shunt products of the pathway. The chain is Cytochrome P450 monooxygenase aneD from Aspergillus aculeatus (strain ATCC 16872 / CBS 172.66 / WB 5094).